Consider the following 224-residue polypeptide: 2-C-methyl-D-erythritol 4-phosphate cytidylyltransferase (224 aa).

This sequence belongs to the IspD/TarI cytidylyltransferase family. IspD subfamily.

It carries out the reaction 2-C-methyl-D-erythritol 4-phosphate + CTP + H(+) = 4-CDP-2-C-methyl-D-erythritol + diphosphate. It functions in the pathway isoprenoid biosynthesis; isopentenyl diphosphate biosynthesis via DXP pathway; isopentenyl diphosphate from 1-deoxy-D-xylulose 5-phosphate: step 2/6. Catalyzes the formation of 4-diphosphocytidyl-2-C-methyl-D-erythritol from CTP and 2-C-methyl-D-erythritol 4-phosphate (MEP). This is 2-C-methyl-D-erythritol 4-phosphate cytidylyltransferase from Clostridium botulinum (strain Eklund 17B / Type B).